Consider the following 189-residue polypeptide: Interferon alpha-6 (189 aa).

A signal peptide spans 1 to 20 (MALPFALLMALVVLSCKSSC). Cystine bridges form between C24–C122 and C52–C162.

Belongs to the alpha/beta interferon family.

The protein resides in the secreted. Produced by macrophages, IFN-alpha have antiviral activities. Interferon stimulates the production of two enzymes: a protein kinase and an oligoadenylate synthetase. The protein is Interferon alpha-6 (IFNA6) of Homo sapiens (Human).